Here is a 62-residue protein sequence, read N- to C-terminus: Alpha-conotoxin-like Ca1.1 (62 aa).

An N-terminal signal peptide occupies residues methionine 1–serine 21. A propeptide spanning residues phenylalanine 22–arginine 46 is cleaved from the precursor. The residue at position 47 (glutamine 47) is a Pyrrolidone carboxylic acid. 2 cysteine pairs are disulfide-bonded: cysteine 49-cysteine 55 and cysteine 50-cysteine 61.

Belongs to the conotoxin A superfamily. Expressed by the venom duct.

Its subcellular location is the secreted. Alpha-conotoxins act on postsynaptic membranes, they bind to the nicotinic acetylcholine receptors (nAChR) and thus inhibit them. The sequence is that of Alpha-conotoxin-like Ca1.1 from Conus caracteristicus (Characteristic cone).